A 546-amino-acid chain; its full sequence is Phenylalanine--tRNA ligase beta subunit (546 aa).

In terms of domain architecture, B5 spans 266–342 (LAPAERVVSV…IAYGIENFDA (77 aa)). Positions 320, 326, 329, and 330 each coordinate Mg(2+).

It belongs to the phenylalanyl-tRNA synthetase beta subunit family. Type 2 subfamily. Tetramer of two alpha and two beta subunits. Mg(2+) is required as a cofactor.

It is found in the cytoplasm. The catalysed reaction is tRNA(Phe) + L-phenylalanine + ATP = L-phenylalanyl-tRNA(Phe) + AMP + diphosphate + H(+). The chain is Phenylalanine--tRNA ligase beta subunit from Methanoculleus marisnigri (strain ATCC 35101 / DSM 1498 / JR1).